Reading from the N-terminus, the 228-residue chain is LexA repressor (228 aa).

A DNA-binding region (H-T-H motif) is located at residues 26 to 46; sequence FDEMKDALDLRSKSGIHRLIT. Residues serine 149 and lysine 187 each act as for autocatalytic cleavage activity in the active site.

Belongs to the peptidase S24 family. Homodimer.

It catalyses the reaction Hydrolysis of Ala-|-Gly bond in repressor LexA.. In terms of biological role, represses a number of genes involved in the response to DNA damage (SOS response), including recA and lexA. In the presence of single-stranded DNA, RecA interacts with LexA causing an autocatalytic cleavage which disrupts the DNA-binding part of LexA, leading to derepression of the SOS regulon and eventually DNA repair. This chain is LexA repressor, found in Cereibacter sphaeroides (strain ATCC 17025 / ATH 2.4.3) (Rhodobacter sphaeroides).